Here is a 392-residue protein sequence, read N- to C-terminus: Tryptophan 2,3-dioxygenase (392 aa).

Substrate contacts are provided by residues 57–61 (FIVTH) and R128. Heme is bound at residue H313. A substrate-binding site is contributed by T328.

This sequence belongs to the tryptophan 2,3-dioxygenase family. In terms of assembly, homotetramer. Dimer of dimers. It depends on heme as a cofactor.

It carries out the reaction L-tryptophan + O2 = N-formyl-L-kynurenine. Its pathway is amino-acid degradation; L-tryptophan degradation via kynurenine pathway; L-kynurenine from L-tryptophan: step 1/2. The protein operates within pigment biosynthesis; ommochrome biosynthesis. Its function is as follows. Heme-dependent dioxygenase that catalyzes the oxidative cleavage of the L-tryptophan (L-Trp) pyrrole ring and converts L-tryptophan to N-formyl-L-kynurenine. Catalyzes the oxidative cleavage of the indole moiety. This is Tryptophan 2,3-dioxygenase from Anopheles gambiae (African malaria mosquito).